Reading from the N-terminus, the 540-residue chain is Methionine--tRNA ligase 1 (540 aa).

The 'HIGH' region signature appears at Pro-10–His-20. The Zn(2+) site is built by Cys-141, Cys-144, Cys-153, and Cys-156. Positions Lys-327 to Ser-331 match the 'KMSKS' region motif. Thr-330 contacts ATP.

This sequence belongs to the class-I aminoacyl-tRNA synthetase family. MetG type 1 subfamily. As to quaternary structure, monomer. Zn(2+) serves as cofactor.

It is found in the cytoplasm. The enzyme catalyses tRNA(Met) + L-methionine + ATP = L-methionyl-tRNA(Met) + AMP + diphosphate. Functionally, is required not only for elongation of protein synthesis but also for the initiation of all mRNA translation through initiator tRNA(fMet) aminoacylation. In Alkaliphilus oremlandii (strain OhILAs) (Clostridium oremlandii (strain OhILAs)), this protein is Methionine--tRNA ligase 1.